Here is a 453-residue protein sequence, read N- to C-terminus: Trypanin (453 aa).

Over residues 1–10 the composition is skewed to basic and acidic residues; the sequence is MPPRTAAERG. The disordered stretch occupies residues 1–22; the sequence is MPPRTAAERGGRRKSVKAPPPV. Coiled-coil stretches lie at residues 60 to 156 and 185 to 377; these read TITK…EMNV and SCEA…LVEE.

This sequence belongs to the DRC4 family.

The protein localises to the cytoplasm. It localises to the cytoskeleton. The protein resides in the cell projection. Its subcellular location is the cilium. It is found in the flagellum. Functionally, cytoskeletal linker that plays a central role in the flagellum cell motility. Required for directional cell motility. Plays a role as part of a dynein regulatory system that regulates flagellar beat in response to signals from the central pair apparatus and radial spokes in procyclic cells. Also plays an essential role in the bloodstream form of the trypanosomes as its silencing is lethal for the circulating form. In Trypanosoma brucei rhodesiense, this protein is Trypanin.